The chain runs to 708 residues: Ribosomal RNA large subunit methyltransferase K/L (708 aa).

The THUMP domain maps to 43 to 154; the sequence is QIYRCCLWSR…KENALLGIDM (112 aa).

Belongs to the methyltransferase superfamily. RlmKL family.

The protein localises to the cytoplasm. It catalyses the reaction guanosine(2445) in 23S rRNA + S-adenosyl-L-methionine = N(2)-methylguanosine(2445) in 23S rRNA + S-adenosyl-L-homocysteine + H(+). The enzyme catalyses guanosine(2069) in 23S rRNA + S-adenosyl-L-methionine = N(2)-methylguanosine(2069) in 23S rRNA + S-adenosyl-L-homocysteine + H(+). Its function is as follows. Specifically methylates the guanine in position 2445 (m2G2445) and the guanine in position 2069 (m7G2069) of 23S rRNA. This is Ribosomal RNA large subunit methyltransferase K/L from Vibrio cholerae serotype O1 (strain ATCC 39541 / Classical Ogawa 395 / O395).